Reading from the N-terminus, the 394-residue chain is MEPILALLLALGPFQLSRGQSFQVNPPEPEVAVAMGTSLQINCSMSCDKDIARVHWHGLDTNLGNVQTLPGSRVLSVRGMLSDTGTRVCVGSCGSRSFQHSVKILVYAFPDQLEVTPEFLVPGRDQVVSCTAHNIWPAGPDSLSFALLRGEQSLEGAQALETEQEEEMQETEGTPLFQVTQRWLLPSLGTPALPALYCQVTMQLPKLVLTHRRKIPVLQSQTSPEPPSTTSAKPYILTSSHTTKAVSTGLSSVALPSTPLSSEGPCYPEIHQNPEADWELLCEASCGSGVTVHWTLAPGDLAAYHKREAGAQAWLSVLPLGPIPEGWFQCRMDPGGQVTSLYVTGQVIPNPSSMVALWIGSLVLGLLALAFLAYCLWKRYRPGPLPDSSSCTLL.

Residues 1–19 form the signal peptide; that stretch reads MEPILALLLALGPFQLSRG. Ig-like domains are found at residues 20 to 107, 108 to 225, and 256 to 345; these read QSFQ…ILVY, AFPD…TSPE, and PSTP…YVTG. At 20-353 the chain is on the extracellular side; it reads QSFQVNPPEP…TGQVIPNPSS (334 aa). N-linked (GlcNAc...) asparagine glycosylation is present at Asn-42. Cystine bridges form between Cys-43-Cys-89, Cys-47-Cys-93, and Cys-130-Cys-198. The mucin-like stretch occupies residues 219–255; it reads QSQTSPEPPSTTSAKPYILTSSHTTKAVSTGLSSVAL. A disulfide bond links Cys-282 and Cys-330. The chain crosses the membrane as a helical span at residues 354–374; it reads MVALWIGSLVLGLLALAFLAY. At 375–394 the chain is on the cytoplasmic side; that stretch reads CLWKRYRPGPLPDSSSCTLL.

As to quaternary structure, homodimer. In terms of tissue distribution, detected in Peyer patches and mesenteric lymph nodes but not in spleen.

Its subcellular location is the membrane. Cell adhesion leukocyte receptor expressed by mucosal venules, helps to direct lymphocyte traffic into mucosal tissues including the Peyer patches and the intestinal lamina propria. It can bind both the integrin alpha-4/beta-7 and L-selectin, regulating both the passage and retention of leukocytes. The chain is Mucosal addressin cell adhesion molecule 1 (Madcam1) from Rattus norvegicus (Rat).